We begin with the raw amino-acid sequence, 106 residues long: Putative membrane protein insertion efficiency factor (106 aa).

The protein belongs to the UPF0161 family.

It is found in the cell inner membrane. Its function is as follows. Could be involved in insertion of integral membrane proteins into the membrane. This is Putative membrane protein insertion efficiency factor from Acinetobacter baumannii (strain SDF).